The chain runs to 169 residues: Small ribosomal subunit protein uS9 (169 aa).

Disordered regions lie at residues 1–29 (MVEP…TETP) and 128–169 (MDPE…YSKR). Over residues 9–21 (DVQEYDENSEEYP) the composition is skewed to acidic residues. The segment covering 150-169 (VERKKAGLKKARKAPQYSKR) has biased composition (basic residues).

It belongs to the universal ribosomal protein uS9 family.

The protein is Small ribosomal subunit protein uS9 of Thermobifida fusca (strain YX).